Here is a 226-residue protein sequence, read N- to C-terminus: Prolactin (226 aa).

The first 29 residues, 1-29, serve as a signal peptide directing secretion; the sequence is MNSQGSAQKAGTLLLLLISNLLFCQNVQP. A disulfide bridge connects residues Cys-33 and Cys-38. 2 positions are modified to phosphoserine: Ser-53 and Ser-117. Cystine bridges form between Cys-85/Cys-201 and Cys-218/Cys-226.

Belongs to the somatotropin/prolactin family. In terms of assembly, interacts with PRLR.

The protein localises to the secreted. Prolactin acts primarily on the mammary gland by promoting lactation. The protein is Prolactin (Prl) of Mus musculus (Mouse).